We begin with the raw amino-acid sequence, 39 residues long: Photosystem II reaction center protein L (39 aa).

Residues 18–38 (ILYWGLLLIFVLAVLFSNYFF) traverse the membrane as a helical segment.

The protein belongs to the PsbL family. As to quaternary structure, PSII is composed of 1 copy each of membrane proteins PsbA, PsbB, PsbC, PsbD, PsbE, PsbF, PsbH, PsbI, PsbJ, PsbK, PsbL, PsbM, PsbT, PsbX, PsbY, PsbZ, Psb30/Ycf12, at least 3 peripheral proteins of the oxygen-evolving complex and a large number of cofactors. It forms dimeric complexes.

The protein resides in the plastid membrane. Its function is as follows. One of the components of the core complex of photosystem II (PSII). PSII is a light-driven water:plastoquinone oxidoreductase that uses light energy to abstract electrons from H(2)O, generating O(2) and a proton gradient subsequently used for ATP formation. It consists of a core antenna complex that captures photons, and an electron transfer chain that converts photonic excitation into a charge separation. This subunit is found at the monomer-monomer interface and is required for correct PSII assembly and/or dimerization. In Cuscuta pentagona (Five-angled dodder), this protein is Photosystem II reaction center protein L.